We begin with the raw amino-acid sequence, 251 residues long: LexA repressor (251 aa).

A DNA-binding region (H-T-H motif) is located at residues 26–46 (FDEMKDALGLKSKSGIHRLIK). Catalysis depends on for autocatalytic cleavage activity residues serine 172 and lysine 210.

It belongs to the peptidase S24 family. Homodimer.

The catalysed reaction is Hydrolysis of Ala-|-Gly bond in repressor LexA.. Functionally, represses a number of genes involved in the response to DNA damage (SOS response), including recA and lexA. In the presence of single-stranded DNA, RecA interacts with LexA causing an autocatalytic cleavage which disrupts the DNA-binding part of LexA, leading to derepression of the SOS regulon and eventually DNA repair. This is LexA repressor from Rhodospirillum rubrum (strain ATCC 11170 / ATH 1.1.1 / DSM 467 / LMG 4362 / NCIMB 8255 / S1).